A 419-amino-acid polypeptide reads, in one-letter code: Testin (419 aa).

Residues 92–199 form the PET domain; the sequence is MILTNPVAAK…GDVKLPSEMN (108 aa). 2 disordered regions span residues 133–164 and 199–222; these read EKQP…PSKC and NAQG…GSKD. Residues 155–164 show a composition bias toward basic and acidic residues; the sequence is PAHDQDPSKC. LIM zinc-binding domains follow at residues 232-295, 297-357, and 360-419; these read YSCY…CDSE, PRCA…NHAV, and QGCH…KMMS.

This sequence belongs to the prickle / espinas / testin family. As to quaternary structure, interacts via LIM domain 1 with ZYX. Interacts (via LIM domain 3) with ENAH and VASP. Interacts with ALKBH4, talin, actin, alpha-actinin, GRIP1 and PXN. Interacts (via LIM domain 2) with ACTL7A (via N-terminus). Heterodimer with ACTL7A; the heterodimer interacts with ENAH to form a heterotrimer.

The protein localises to the cytoplasm. The protein resides in the cell junction. It localises to the focal adhesion. In terms of biological role, scaffold protein that may play a role in cell adhesion, cell spreading and in the reorganization of the actin cytoskeleton. Plays a role in the regulation of cell proliferation. May act as a tumor suppressor. The protein is Testin (Tes) of Rattus norvegicus (Rat).